The primary structure comprises 174 residues: Large ribosomal subunit protein bL17 (174 aa).

It belongs to the bacterial ribosomal protein bL17 family. As to quaternary structure, part of the 50S ribosomal subunit. Contacts protein L32.

The chain is Large ribosomal subunit protein bL17 from Acetivibrio thermocellus (strain ATCC 27405 / DSM 1237 / JCM 9322 / NBRC 103400 / NCIMB 10682 / NRRL B-4536 / VPI 7372) (Clostridium thermocellum).